Consider the following 172-residue polypeptide: Adenine phosphoribosyltransferase (172 aa).

The protein belongs to the purine/pyrimidine phosphoribosyltransferase family. Homodimer.

Its subcellular location is the cytoplasm. The catalysed reaction is AMP + diphosphate = 5-phospho-alpha-D-ribose 1-diphosphate + adenine. The protein operates within purine metabolism; AMP biosynthesis via salvage pathway; AMP from adenine: step 1/1. In terms of biological role, catalyzes a salvage reaction resulting in the formation of AMP, that is energically less costly than de novo synthesis. The polypeptide is Adenine phosphoribosyltransferase (Prochlorococcus marinus (strain NATL1A)).